The chain runs to 496 residues: tRNA-2-methylthio-N(6)-dimethylallyladenosine synthase (496 aa).

In terms of domain architecture, MTTase N-terminal spans R10–V126. 6 residues coordinate [4Fe-4S] cluster: C19, C55, C89, C163, C167, and C170. One can recognise a Radical SAM core domain in the interval R149–E380. Residues K382–V451 enclose the TRAM domain. Residues A465–R496 form a disordered region. A compositionally biased stretch (pro residues) spans A487–R496.

It belongs to the methylthiotransferase family. MiaB subfamily. In terms of assembly, monomer. Requires [4Fe-4S] cluster as cofactor.

It localises to the cytoplasm. It catalyses the reaction N(6)-dimethylallyladenosine(37) in tRNA + (sulfur carrier)-SH + AH2 + 2 S-adenosyl-L-methionine = 2-methylsulfanyl-N(6)-dimethylallyladenosine(37) in tRNA + (sulfur carrier)-H + 5'-deoxyadenosine + L-methionine + A + S-adenosyl-L-homocysteine + 2 H(+). Its function is as follows. Catalyzes the methylthiolation of N6-(dimethylallyl)adenosine (i(6)A), leading to the formation of 2-methylthio-N6-(dimethylallyl)adenosine (ms(2)i(6)A) at position 37 in tRNAs that read codons beginning with uridine. This Nocardioides sp. (strain ATCC BAA-499 / JS614) protein is tRNA-2-methylthio-N(6)-dimethylallyladenosine synthase.